A 270-amino-acid polypeptide reads, in one-letter code: Tetraspanin-14 (270 aa).

At 1-17 (MHYYRYSNAKVSCWYKY) the chain is on the cytoplasmic side. A helical transmembrane segment spans residues 18–38 (LLFSYNIIFWLAGVVFLGVGL). The Extracellular portion of the chain corresponds to 39 to 61 (WAWSEKGVLSDLTKVTRMHGIDP). The helical transmembrane segment at 62 to 82 (VVLVLMVGVVMFTLGFAGCVG) threads the bilayer. At 83–92 (ALRENICLLN) the chain is on the cytoplasmic side. The chain crosses the membrane as a helical span at residues 93-113 (FFCGTIVLIFFLELAVAVLAF). Topologically, residues 114-232 (LFQDWVRDRF…QALESWLPRN (119 aa)) are extracellular. Residues 114 to 232 (LFQDWVRDRF…QALESWLPRN (119 aa)) are necessary and sufficient for interaction with ADAM10. Disulfide bonds link Cys153-Cys221, Cys154-Cys186, Cys170-Cys180, and Cys187-Cys200. An N-linked (GlcNAc...) asparagine glycan is attached at Asn169. A helical transmembrane segment spans residues 233-253 (IYIVAGVFIAISLLQIFGIFL). At 254 to 270 (ARTLISDIEAVKAGHHF) the chain is on the cytoplasmic side.

This sequence belongs to the tetraspanin (TM4SF) family. In terms of assembly, interacts with ADAM10; the interaction promotes ADAM10 maturation and cell surface expression.

The protein localises to the cell membrane. In terms of biological role, part of TspanC8 subgroup, composed of 6 members that interact with the transmembrane metalloprotease ADAM10. This interaction is required for ADAM10 exit from the endoplasmic reticulum and for enzymatic maturation and trafficking to the cell surface as well as substrate specificity. Different TspanC8/ADAM10 complexes have distinct substrates. Negatively regulates ADAM10-mediated cleavage of GP6. Promotes ADAM10-mediated cleavage of CDH5. The polypeptide is Tetraspanin-14 (Homo sapiens (Human)).